The following is a 214-amino-acid chain: Probable nicotinate-nucleotide adenylyltransferase (214 aa).

It belongs to the NadD family.

It carries out the reaction nicotinate beta-D-ribonucleotide + ATP + H(+) = deamido-NAD(+) + diphosphate. It functions in the pathway cofactor biosynthesis; NAD(+) biosynthesis; deamido-NAD(+) from nicotinate D-ribonucleotide: step 1/1. Functionally, catalyzes the reversible adenylation of nicotinate mononucleotide (NaMN) to nicotinic acid adenine dinucleotide (NaAD). This Buchnera aphidicola subsp. Acyrthosiphon pisum (strain 5A) protein is Probable nicotinate-nucleotide adenylyltransferase.